The chain runs to 161 residues: Suppressor of kinetochore protein 1 (161 aa).

Residues 102-161 (VLASNYLDIKPLLDTGCKTVANMIRGKSPEDIRKTFNIPNDFTPEEEEQIRKENEWAEDR) form an interaction with the F-box domain of F-box proteins region.

Belongs to the SKP1 family. Essential component of the E3 ubiquitin ligase Skp1-Cullin-1-F-box (SCF) complex. Interacts with cul1, fbh1, mcs2, pip1, pof1, pof2, pof3, pof4, pof5, pof6, pof7, pof8, pof9, pof10, pof11, pof12, pof13, pof14, pop1, pop2 and tfb3. Forms a complex with pof6 and sip1. Component of the RAVE complex composed of rav1, rav2 and skp1.

The protein localises to the cytoplasm. It localises to the nucleus. Required for cig2 degradation in the G2 and M phases of the cell cycle. Together with pof6, essential for septum processing and cell separation. Involved in mitotic progression, essential for the execution of anaphase B; required for coordinated structural alterations of mitotic spindles and segregation of nuclear membrane structures at anaphase. Involved in the DNA damage checkpoint pathway and maintenance of genome integrity. Component of the RAVE complex which is required for stable assembly of the vacuolar ATPase complex V-ATPase. The protein is Suppressor of kinetochore protein 1 of Schizosaccharomyces pombe (strain 972 / ATCC 24843) (Fission yeast).